Here is a 270-residue protein sequence, read N- to C-terminus: 3-methyl-2-oxobutanoate hydroxymethyltransferase (270 aa).

Asp50 and Asp89 together coordinate Mg(2+). 3-methyl-2-oxobutanoate is bound by residues 50 to 51 (DS), Asp89, and Lys118. Glu120 serves as a coordination point for Mg(2+). Residue Glu187 is the Proton acceptor of the active site.

Belongs to the PanB family. In terms of assembly, homodecamer; pentamer of dimers. The cofactor is Mg(2+).

Its subcellular location is the cytoplasm. It catalyses the reaction 3-methyl-2-oxobutanoate + (6R)-5,10-methylene-5,6,7,8-tetrahydrofolate + H2O = 2-dehydropantoate + (6S)-5,6,7,8-tetrahydrofolate. It participates in cofactor biosynthesis; (R)-pantothenate biosynthesis; (R)-pantoate from 3-methyl-2-oxobutanoate: step 1/2. In terms of biological role, catalyzes the reversible reaction in which hydroxymethyl group from 5,10-methylenetetrahydrofolate is transferred onto alpha-ketoisovalerate to form ketopantoate. This is 3-methyl-2-oxobutanoate hydroxymethyltransferase from Helicobacter acinonychis (strain Sheeba).